The following is a 485-amino-acid chain: MFS-type transporter phm3 (485 aa).

The interval 1-22 is disordered; that stretch reads MSLQDPTKEHNNTSPSPKDEKT. 12 helical membrane passes run 55–75, 83–103, 113–133, 144–164, 175–195, 203–223, 278–298, 317–337, 357–377, 384–404, 421–441, and 449–469; these read FTLY…LLVA, IVAS…PFLL, LWLY…CALS, FICG…IADL, ALFG…GGFV, WTFY…AVIM, PIVL…YLLF, GLAF…FAIL, LVLM…YGWS, WIVP…ILMP, ALAV…LAGP, and LGWG…VPFV.

Belongs to the major facilitator superfamily.

Its subcellular location is the cell membrane. In terms of biological role, MFS-type transporter; part of the gene cluster that mediates the biosynthesis of the trans-fused decalin-containing tetramic acid phomasetin. This chain is MFS-type transporter phm3, found in Pyrenochaetopsis sp.